Consider the following 232-residue polypeptide: uncharacterized protein (232 aa).

Residues 89 to 140 are a coiled coil; that stretch reads EFGTWQRRKNSLEDSLREVMKRRGELQDQLTAELGAIERMQTDLVGARQTLD.

This is an uncharacterized protein from Mycobacterium leprae (strain TN).